Reading from the N-terminus, the 830-residue chain is Serine/threonine-protein kinase pkn2 (830 aa).

At 1–605 (MLAPDSLVLD…GELLRQRRRE (605 aa)) the chain is on the cytoplasmic side. In terms of domain architecture, Protein kinase spans 13 to 283 (FRVLRPLGSG…DALAAAHSAL (271 aa)). ATP is bound by residues 19-27 (LGSGGMGEV) and Lys42. The Proton acceptor role is filled by Asp135. The tract at residues 296–326 (VPQPGSGATPSSGTSVFGTGSASGSSSGPTG) is disordered. The span at 299-326 (PGSGATPSSGTSVFGTGSASGSSSGPTG) shows a compositional bias: low complexity. One can recognise a Guanylate cyclase domain in the interval 396 to 511 (TVMLTDIQGF…EPMEVIEAVE (116 aa)). The helical transmembrane segment at 606–623 (AALVAGAVVLLGAGAAWL) threads the bilayer. Residues 624-830 (SQRNDAGTRA…AIKSLKQKSD (207 aa)) lie on the Periplasmic side of the membrane.

This sequence belongs to the protein kinase superfamily. Ser/Thr protein kinase family.

It localises to the cell membrane. The catalysed reaction is L-seryl-[protein] + ATP = O-phospho-L-seryl-[protein] + ADP + H(+). It catalyses the reaction L-threonyl-[protein] + ATP = O-phospho-L-threonyl-[protein] + ADP + H(+). In terms of biological role, regulates the activity of endogenous beta-lactamase or related enzymes, by blocking their secretion by phosphorylation, in response to an external signal yet to be identified. In Myxococcus xanthus, this protein is Serine/threonine-protein kinase pkn2 (pkn2).